We begin with the raw amino-acid sequence, 478 residues long: V-type proton ATPase subunit H (478 aa).

It belongs to the V-ATPase H subunit family. As to quaternary structure, V-ATPase is a heteromultimeric enzyme composed of a peripheral catalytic V1 complex (components A to H) attached to an integral membrane V0 proton pore complex (components: a, c, c', c'', d, e, f and VOA1). Interacts with YND1.

Its subcellular location is the vacuole membrane. Functionally, subunit of the V1 complex of vacuolar(H+)-ATPase (V-ATPase), a multisubunit enzyme composed of a peripheral complex (V1) that hydrolyzes ATP and a membrane integral complex (V0) that translocates protons. V-ATPase is responsible for acidifying and maintaining the pH of intracellular compartments. This subunit is essential for activity, but not assembly, of the enzyme complex. This subunit is also required for silencing the ATPase activity of V-ATPase when V1 is detached from V0. This is V-type proton ATPase subunit H from Saccharomyces cerevisiae (strain ATCC 204508 / S288c) (Baker's yeast).